The sequence spans 372 residues: Histidine protein methyltransferase 1 homolog (372 aa).

Disordered stretches follow at residues 30–55 (SKEL…QFDL) and 68–103 (NAAP…AKEH). Basic and acidic residues predominate over residues 39-49 (QKGEERDRKCS). Positions 70 to 87 (APSQDTDSPLSAASSSRN) are enriched in polar residues. A phosphoserine mark is found at Ser72 and Ser77. Tele-methylhistidine; by autocatalysis is present on His154. Residues 168–172 (IWECT), Gly195, and 216–218 (QDY) each bind S-adenosyl-L-methionine. A Nuclear localization signal motif is present at residues 247 to 253 (PDVKRCR). Residues 268-270 (GEW) and Ser293 each bind S-adenosyl-L-methionine.

It belongs to the methyltransferase superfamily. METTL18 family. In terms of assembly, interacts with GRWD1 and members of the heat shock protein 90 and 70 families; these proteins may possibly be methylation substrates for the enzyme. Post-translationally, monomethylated at His-154 through automethylation. Automethylation at His-154 positively regulates the methyltransferase activity toward RPL3. Probably methylated on other residues.

Its subcellular location is the cytoplasm. The protein resides in the cytosol. The protein localises to the nucleus. It localises to the nucleolus. It carries out the reaction L-histidyl-[protein] + S-adenosyl-L-methionine = N(tele)-methyl-L-histidyl-[protein] + S-adenosyl-L-homocysteine + H(+). Protein-L-histidine N-tele-methyltransferase that specifically monomethylates RPL3, thereby regulating translation elongation. Histidine methylation of RPL3 regulates translation elongation by slowing ribosome traversal on tyrosine codons: slower elongation provides enough time for proper folding of synthesized proteins and prevents cellular aggregation of tyrosine-rich proteins. The polypeptide is Histidine protein methyltransferase 1 homolog (Homo sapiens (Human)).